We begin with the raw amino-acid sequence, 448 residues long: Adenylosuccinate synthetase (448 aa).

Residues 36-42 (GDEGKGK) and 64-66 (GHT) contribute to the GTP site. Asp37 acts as the Proton acceptor in catalysis. Residues Asp37 and Gly64 each contribute to the Mg(2+) site. IMP-binding positions include 37–40 (DEGK), 62–65 (NAGH), Thr154, Arg168, Asn246, Thr261, and Arg325. The Proton donor role is filled by His65. 321–327 (VTTKRKR) provides a ligand contact to substrate. GTP is bound by residues Arg327, 353–355 (KLD), and 436–438 (GVG).

The protein belongs to the adenylosuccinate synthetase family. In terms of assembly, homodimer. The cofactor is Mg(2+).

Its subcellular location is the cytoplasm. It catalyses the reaction IMP + L-aspartate + GTP = N(6)-(1,2-dicarboxyethyl)-AMP + GDP + phosphate + 2 H(+). Its pathway is purine metabolism; AMP biosynthesis via de novo pathway; AMP from IMP: step 1/2. Plays an important role in the de novo pathway and in the salvage pathway of purine nucleotide biosynthesis. Catalyzes the first committed step in the biosynthesis of AMP from IMP. In Drosophila virilis (Fruit fly), this protein is Adenylosuccinate synthetase.